A 725-amino-acid chain; its full sequence is MSDSKCPFHHAPAEGTSNRDWWPNQLRLEILHQRSALSNPLGEEFNYAEAFKSLDLAAIKQDLTALMTDSQDWWPADFGHYGPLFIRMAWHSAGTYRTGDGRGGGGTGNQRFAPLNSWPDNVNLDKARRLLWPIKQKYGQKISWADLMILAGNVALESMGFKTFGFGGGRADIWEPEQDIYWGAEKTWLDDNRYSGDRDLENPLAAVQMGLIYVNPEGPNGNPDPVAAAKDIRETFARMAMDDEETVALIAGGHTFGKTHGAGDAANVGPEPEAAGLEEQGLGWRSSYGSGKAGDAITSGLEVTWTETPTQWSNNFFENLFGYEWELTKSPAGAHQWVPKGGAGADKIPDAHDPSKRHVPTMLTTDLSLRFDPAYEKISRRFYENPDQLADAFARAWFKLTHRDMGPRARYLGPEVPAEELIWQDPIPAVDHPLINDQDISALKSKILTSGLSVAQMVSTAWASASTFRGSDMRGGANGARIRLAPQNEWEVNQPDQLAQVLKTLEGVQAEFNSAQSDGKKVSLADIIVLAGCAGVEKAAQNAGHTIKVPFSPGRMDASQEQTDIEAFEVLEPIADGFRNYMKGKYAVSPEELLVDRAQLLTLTAPEMTVLIGGMRVLNANVGQSKHGVFTQRPESLTNDFFVNLLDMGTVWKATSKEEDLFEGRDRVTGDLKWTGTRIDLVFGSNSQLRALAEVYASSDAQERFLKDFVAAWTKVMNLDRFDLA.

The tryptophyl-tyrosyl-methioninium (Trp-Tyr) (with M-239) cross-link spans 90–213 (WHSAGTYRTG…LAAVQMGLIY (124 aa)). Histidine 91 functions as the Proton acceptor in the catalytic mechanism. A cross-link (tryptophyl-tyrosyl-methioninium (Tyr-Met) (with W-90)) is located at residues 213 to 239 (YVNPEGPNGNPDPVAAAKDIRETFARM). Histidine 254 is a binding site for heme b.

Belongs to the peroxidase family. Peroxidase/catalase subfamily. In terms of assembly, homodimer or homotetramer. Heme b is required as a cofactor. Formation of the three residue Trp-Tyr-Met cross-link is important for the catalase, but not the peroxidase activity of the enzyme.

It carries out the reaction H2O2 + AH2 = A + 2 H2O. The catalysed reaction is 2 H2O2 = O2 + 2 H2O. Bifunctional enzyme with both catalase and broad-spectrum peroxidase activity. The sequence is that of Catalase-peroxidase from Hahella chejuensis (strain KCTC 2396).